The sequence spans 362 residues: Peptide chain release factor 1 (362 aa).

Glutamine 235 bears the N5-methylglutamine mark.

Belongs to the prokaryotic/mitochondrial release factor family. In terms of processing, methylated by PrmC. Methylation increases the termination efficiency of RF1.

The protein localises to the cytoplasm. Its function is as follows. Peptide chain release factor 1 directs the termination of translation in response to the peptide chain termination codons UAG and UAA. This chain is Peptide chain release factor 1, found in Acinetobacter baumannii (strain AYE).